The primary structure comprises 271 residues: Phosphonoacetaldehyde hydrolase (271 aa).

Catalysis depends on D12, which acts as the Nucleophile. Residues D12 and A14 each contribute to the Mg(2+) site. K54 (schiff-base intermediate with substrate) is an active-site residue. D188 lines the Mg(2+) pocket.

Belongs to the HAD-like hydrolase superfamily. PhnX family. As to quaternary structure, homodimer. Mg(2+) serves as cofactor.

The catalysed reaction is phosphonoacetaldehyde + H2O = acetaldehyde + phosphate + H(+). Involved in phosphonate degradation. This Vibrio campbellii (strain ATCC BAA-1116) protein is Phosphonoacetaldehyde hydrolase.